The chain runs to 44 residues: Photosystem I reaction center subunit IX (44 aa).

Residues 7 to 27 (YLSVAPVISTLWFGSLAGLLI) form a helical membrane-spanning segment.

The protein belongs to the PsaJ family.

It localises to the plastid. It is found in the chloroplast thylakoid membrane. In terms of biological role, may help in the organization of the PsaE and PsaF subunits. This is Photosystem I reaction center subunit IX from Populus alba (White poplar).